The primary structure comprises 350 residues: Protein RecA (350 aa).

66-73 (GPESSGKT) provides a ligand contact to ATP.

It belongs to the RecA family.

It is found in the cytoplasm. Functionally, can catalyze the hydrolysis of ATP in the presence of single-stranded DNA, the ATP-dependent uptake of single-stranded DNA by duplex DNA, and the ATP-dependent hybridization of homologous single-stranded DNAs. It interacts with LexA causing its activation and leading to its autocatalytic cleavage. In Nocardioides sp. (strain ATCC BAA-499 / JS614), this protein is Protein RecA.